We begin with the raw amino-acid sequence, 283 residues long: Thymidylate synthase (283 aa).

Residue Arg22 participates in dUMP binding. Cys160 functions as the Nucleophile in the catalytic mechanism. DUMP is bound by residues 180-183, Asn191, and 221-223; these read RSCD and HIY. (6R)-5,10-methylene-5,6,7,8-tetrahydrofolate is bound at residue Asp183. Ser282 is a binding site for (6R)-5,10-methylene-5,6,7,8-tetrahydrofolate.

It belongs to the thymidylate synthase family. Bacterial-type ThyA subfamily. Homodimer.

Its subcellular location is the cytoplasm. The catalysed reaction is dUMP + (6R)-5,10-methylene-5,6,7,8-tetrahydrofolate = 7,8-dihydrofolate + dTMP. It participates in pyrimidine metabolism; dTTP biosynthesis. Its function is as follows. Catalyzes the reductive methylation of 2'-deoxyuridine-5'-monophosphate (dUMP) to 2'-deoxythymidine-5'-monophosphate (dTMP) while utilizing 5,10-methylenetetrahydrofolate (mTHF) as the methyl donor and reductant in the reaction, yielding dihydrofolate (DHF) as a by-product. This enzymatic reaction provides an intracellular de novo source of dTMP, an essential precursor for DNA biosynthesis. The sequence is that of Thymidylate synthase from Shewanella pealeana (strain ATCC 700345 / ANG-SQ1).